A 226-amino-acid chain; its full sequence is Probable N-acetyl-alpha-D-glucosaminyl L-malate deacetylase 2 (226 aa).

Residues histidine 13, aspartate 16, and histidine 127 each coordinate Zn(2+).

This sequence belongs to the PIGL family. Zn(2+) is required as a cofactor.

The enzyme catalyses (S)-malyl N-acetyl-alpha-D-glucosaminide + H2O = (S)-malyl alpha-D-glucosaminide + acetate. Functionally, involved in bacillithiol (BSH) biosynthesis. Catalyzes the second step of the pathway, the deacetylation of N-acetylglucosaminylmalate (GlcNAc-Mal) to glucosamine malate (GlcN-Mal). Could also be involved in bacillithiol-detoxifying pathways through formation of S-mercapturic adducts. This is Probable N-acetyl-alpha-D-glucosaminyl L-malate deacetylase 2 from Bacillus anthracis.